Reading from the N-terminus, the 276-residue chain is F-box/LRR-repeat protein 20 (276 aa).

The region spanning 22 to 68 (AVINKKLPKELLLRIFSFLDVVTLCRCAQVSRAWNVLALDGSNWQRI) is the F-box domain. 8 LRR repeats span residues 74–100 (QRDI…SLRG), 101–126 (CLGV…SLNG), 127–152 (CTKT…DLAS), 153–178 (CTSI…NISW), 179–204 (CDQV…FLKG), 205–230 (CTQL…NLQT), 231–256 (CLQI…CASG), and 257–276 (CSNI…PRLR).

In terms of assembly, interacts with SKP1 and CUL1. As to expression, widely expressed, with highest expression in skeletal muscle, heart and brain.

Its subcellular location is the cytoplasm. Substrate-recognition component of the SCF (SKP1-CUL1-F-box protein)-type E3 ubiquitin ligase complex. Role in neural transmission. The polypeptide is F-box/LRR-repeat protein 20 (Fbxl20) (Rattus norvegicus (Rat)).